Reading from the N-terminus, the 584-residue chain is Protein FAM117B (584 aa).

Residues 1 to 214 (MSQRVRRNGS…SSSSSIIRRT (214 aa)) are disordered. Serine 10 bears the Phosphoserine mark. Over residues 53 to 79 (TRGGGGGGNNGGNGGASGPSGGGGSGG) the composition is skewed to gly residues. A compositionally biased stretch (low complexity) spans 80–90 (PRTASRSTSPT). Phosphoserine is present on serine 102. Residues 114-132 (TSTRGTSPTRGTAPGARSS) show a composition bias toward low complexity. The segment covering 133–142 (PPRPQPPPPL) has biased composition (pro residues). Residues 145 to 154 (TVSSPSSSPT) show a composition bias toward polar residues. Positions 204 to 214 (SSSSSSIIRRT) are enriched in low complexity. Phosphoserine occurs at positions 206, 215, 216, and 268. Disordered regions lie at residues 227–461 (GHWP…SYMF) and 551–584 (STNT…EAEG). The segment covering 287–297 (RSKHSSRHHRD) has biased composition (basic residues). Serine 340 carries the phosphoserine modification. The segment covering 350-361 (IIIKETGEKEEQ) has biased composition (basic and acidic residues). Positions 379–392 (QRSSSTRSIDTQTP) are enriched in polar residues. The residue at position 386 (serine 386) is a Phosphoserine. A compositionally biased stretch (low complexity) spans 399–412 (SNNSSRSQSVSPTS). A phosphoserine mark is found at serine 444 and serine 452.

The chain is Protein FAM117B (Fam117b) from Mus musculus (Mouse).